Consider the following 84-residue polypeptide: Small ribosomal subunit protein bS20 (84 aa).

The disordered stretch occupies residues 1–28; that stretch reads MPNIKSAIKRVKTADTRNSRNASQRSAM.

This sequence belongs to the bacterial ribosomal protein bS20 family.

In terms of biological role, binds directly to 16S ribosomal RNA. This Listeria welshimeri serovar 6b (strain ATCC 35897 / DSM 20650 / CCUG 15529 / CIP 8149 / NCTC 11857 / SLCC 5334 / V8) protein is Small ribosomal subunit protein bS20.